We begin with the raw amino-acid sequence, 180 residues long: Cytokinin-beta-glucosidase 4 (180 aa).

Hydrolyzes cytokinin glucosides thus liberating free cytokinins. The protein is Cytokinin-beta-glucosidase 4 (ROLC4) of Panax ginseng (Korean ginseng).